The chain runs to 417 residues: Gamma-glutamyl phosphate reductase (417 aa).

Belongs to the gamma-glutamyl phosphate reductase family.

It is found in the cytoplasm. It catalyses the reaction L-glutamate 5-semialdehyde + phosphate + NADP(+) = L-glutamyl 5-phosphate + NADPH + H(+). The protein operates within amino-acid biosynthesis; L-proline biosynthesis; L-glutamate 5-semialdehyde from L-glutamate: step 2/2. Functionally, catalyzes the NADPH-dependent reduction of L-glutamate 5-phosphate into L-glutamate 5-semialdehyde and phosphate. The product spontaneously undergoes cyclization to form 1-pyrroline-5-carboxylate. The sequence is that of Gamma-glutamyl phosphate reductase from Desulfitobacterium hafniense (strain Y51).